Here is a 336-residue protein sequence, read N- to C-terminus: Ornithine carbamoyltransferase, catabolic (336 aa).

Carbamoyl phosphate-binding positions include 57-60 (STRT), Gln84, Arg108, and 135-138 (HPTQ). Residues Asn168, Asp232, and 236 to 237 (SM) each bind L-ornithine. Carbamoyl phosphate is bound by residues 274-275 (CL) and Arg321.

Belongs to the aspartate/ornithine carbamoyltransferase superfamily. OTCase family.

It is found in the cytoplasm. It catalyses the reaction carbamoyl phosphate + L-ornithine = L-citrulline + phosphate + H(+). The protein operates within amino-acid degradation; L-arginine degradation via ADI pathway; carbamoyl phosphate from L-arginine: step 2/2. In terms of biological role, reversibly catalyzes the transfer of the carbamoyl group from carbamoyl phosphate (CP) to the N(epsilon) atom of ornithine (ORN) to produce L-citrulline. This is Ornithine carbamoyltransferase, catabolic from Burkholderia mallei (strain ATCC 23344).